Consider the following 1038-residue polypeptide: Protein transport protein SEC24 A (1038 aa).

The segment at 1–247 (MGTENQGYPN…PPHTGGFAQR (247 aa)) is disordered. Residues 22–33 (SAPPPGIPPQSG) show a composition bias toward pro residues. Zn(2+) contacts are provided by cysteine 371, cysteine 374, cysteine 393, and cysteine 396. A zinc finger-like region spans residues 371 to 396 (CRRCRTYVNPFVTFTDSGRKWRCNIC).

This sequence belongs to the SEC23/SEC24 family. SEC24 subfamily. Component of the coat protein complex II (COPII), composed of at least five proteins: the Sec23/24 complex, the Sec13/31 complex and Sar1. Interacts with SEC221, SEC23E/SEC23A, SEC23B, SEC23G/SEC23C and SEC23F/SEC23D. In terms of assembly, (Microbial infection) Interacts with turnip mosaic virus (TuMV) 6K2 in COPII-coated vesicles. As to expression, mainly expressed in pollen, leaves, inflorescences, roots and stems, and, to a lower extent, in cotyledons, petioles and hypocotyls.

Its subcellular location is the cytoplasmic vesicle. It localises to the COPII-coated vesicle membrane. The protein localises to the endoplasmic reticulum membrane. It is found in the golgi apparatus membrane. The protein resides in the cytoplasm. Its subcellular location is the cytosol. Its function is as follows. Essential protein. Component of the coat protein complex II (COPII), that covers ER-derived vesicles involved in transport from the endoplasmic reticulum to the Golgi apparatus. COPII is composed of at least five proteins: the SEC23/24 complex, the SEC13/31 complex, and the protein SAR1. Acts in the cytoplasm to promote the transport of secretory, plasma membrane, and vacuolar proteins from the endoplasmic reticulum to the Golgi complex. Involved in maintaining the dynamic identity of organelles of the early secretory pathway. Regulates cell size patterning, and prevents CDKA;1-, DEK1- and ACR4-dependent endoreduplication and giant cells formation in sepals. Required for male gametophytes (pollen grains) development and transmission. (Microbial infection) Contributes to viral systemic infection of turnip mosaic virus (TuMV) by triggering the formation of host endoplasmic reticulum (ER)-derived viral vesicles that carry the viral RNA (vRNA) to plasmodesmata for cell-to-cell viral movement. In Arabidopsis thaliana (Mouse-ear cress), this protein is Protein transport protein SEC24 A.